The following is a 173-amino-acid chain: Putative metal-dependent hydrolase OB0413 (173 aa).

3 residues coordinate Zn(2+): His-64, His-155, and His-159.

It belongs to the metal hydrolase YfiT family. Homodimer. It depends on Zn(2+) as a cofactor.

The protein resides in the cytoplasm. Possible metal-dependent hydrolase. This chain is Putative metal-dependent hydrolase OB0413, found in Oceanobacillus iheyensis (strain DSM 14371 / CIP 107618 / JCM 11309 / KCTC 3954 / HTE831).